A 116-amino-acid polypeptide reads, in one-letter code: PTS system galactose-specific EIIA component (116 aa).

A PTS EIIA type-3 domain is found at 11–109; that stretch reads DDYMGVVMGI…AVEVVGQERR (99 aa). H85 functions as the Tele-phosphohistidine intermediate in the catalytic mechanism. H85 carries the post-translational modification Phosphohistidine; by HPr. D88 serves as a coordination point for Mg(2+).

Homotrimer. Mg(2+) is required as a cofactor.

The phosphoenolpyruvate-dependent sugar phosphotransferase system (sugar PTS), a major carbohydrate active transport system, catalyzes the phosphorylation of incoming sugar substrates concomitantly with their translocation across the cell membrane. Involved in galactose transport with PtcB and Lmg_0963. The sequence is that of PTS system galactose-specific EIIA component from Lactococcus lactis subsp. cremoris (strain MG1363).